Here is a 445-residue protein sequence, read N- to C-terminus: Chromosome partition protein MukF (445 aa).

The segment at 213-241 (LSETSATLKELQDTLQAAGDELQTQILDI) is leucine-zipper.

Belongs to the MukF family. Interacts, and probably forms a ternary complex, with MukE and MukB via its C-terminal region. The complex formation is stimulated by calcium or magnesium. It is required for an interaction between MukE and MukB.

It is found in the cytoplasm. Its subcellular location is the nucleoid. In terms of biological role, involved in chromosome condensation, segregation and cell cycle progression. May participate in facilitating chromosome segregation by condensation DNA from both sides of a centrally located replisome during cell division. Not required for mini-F plasmid partitioning. Probably acts via its interaction with MukB and MukE. Overexpression results in anucleate cells. It has a calcium binding activity. The sequence is that of Chromosome partition protein MukF from Vibrio atlanticus (strain LGP32) (Vibrio splendidus (strain Mel32)).